The sequence spans 1403 residues: Centrosomal protein of 162 kDa (1403 aa).

The tract at residues 19-44 (ELSDDSFENSNETPSQPNKDRKKKDT) is disordered. Over residues 26–35 (ENSNETPSQP) the composition is skewed to polar residues. Residues S156 and S159 each carry the phosphoserine modification. 3 disordered regions span residues 171–235 (NVEP…EKTG), 305–342 (DTGEPRIEASPGHSVRSSAKDGLQENEESSKNISTTES), and 449–586 (NPSL…SDDS). Positions 176–189 (EGGRENESEHKELP) are enriched in basic and acidic residues. Over residues 192–204 (YSDDFEDAEDTDE) the composition is skewed to acidic residues. Residues 206 to 220 (LITKDEETRPKENPE) are compositionally biased toward basic and acidic residues. Positions 449–466 (NPSLLPQDNKANQTSRSR) are enriched in polar residues. S468 carries the phosphoserine modification. Residues 481–496 (PCKKARSAPPLPRRKP) show a composition bias toward basic residues. Residues 504 to 517 (ARSSGYSKPSSPLQ) are compositionally biased toward polar residues. Composition is skewed to basic and acidic residues over residues 522–532 (LEKKTSKDNTK) and 567–581 (PHREGSPATPKRPED). Coiled coils occupy residues 610 to 1120 (KRAQ…MLSR), 1170 to 1205 (EVLEENYRLRSELEGLTLEREKLKMESEAAVCQLES), and 1234 to 1385 (CQNA…LHRQ).

The protein belongs to the CEP162 family. As to quaternary structure, interacts with alpha-tubulin. Interacts with CPNE4. Interacts with CEP290.

Its subcellular location is the cytoplasm. It localises to the cytoskeleton. The protein resides in the microtubule organizing center. The protein localises to the centrosome. It is found in the centriole. Its subcellular location is the spindle. It localises to the nucleus. Required to promote assembly of the transition zone in primary cilia. Acts by specifically recognizing and binding the axonemal microtubule. Localizes to the distal ends of centrioles before ciliogenesis and directly binds to axonemal microtubule, thereby promoting and restricting transition zone formation specifically at the cilia base. Required to mediate CEP290 association with microtubules. The sequence is that of Centrosomal protein of 162 kDa (Cep162) from Rattus norvegicus (Rat).